We begin with the raw amino-acid sequence, 322 residues long: 4-hydroxy-3-methylbut-2-enyl diphosphate reductase (322 aa).

C15 serves as a coordination point for [4Fe-4S] cluster. The (2E)-4-hydroxy-3-methylbut-2-enyl diphosphate site is built by H44 and H77. 2 residues coordinate dimethylallyl diphosphate: H44 and H77. Isopentenyl diphosphate contacts are provided by H44 and H77. C99 is a [4Fe-4S] cluster binding site. H127 provides a ligand contact to (2E)-4-hydroxy-3-methylbut-2-enyl diphosphate. H127 serves as a coordination point for dimethylallyl diphosphate. Isopentenyl diphosphate is bound at residue H127. The active-site Proton donor is the E129. T168 contacts (2E)-4-hydroxy-3-methylbut-2-enyl diphosphate. [4Fe-4S] cluster is bound at residue C198. Residues S226, S227, N228, and S270 each contribute to the (2E)-4-hydroxy-3-methylbut-2-enyl diphosphate site. Dimethylallyl diphosphate-binding residues include S226, S227, N228, and S270. S226, S227, N228, and S270 together coordinate isopentenyl diphosphate.

The protein belongs to the IspH family. The cofactor is [4Fe-4S] cluster.

The catalysed reaction is isopentenyl diphosphate + 2 oxidized [2Fe-2S]-[ferredoxin] + H2O = (2E)-4-hydroxy-3-methylbut-2-enyl diphosphate + 2 reduced [2Fe-2S]-[ferredoxin] + 2 H(+). The enzyme catalyses dimethylallyl diphosphate + 2 oxidized [2Fe-2S]-[ferredoxin] + H2O = (2E)-4-hydroxy-3-methylbut-2-enyl diphosphate + 2 reduced [2Fe-2S]-[ferredoxin] + 2 H(+). It participates in isoprenoid biosynthesis; dimethylallyl diphosphate biosynthesis; dimethylallyl diphosphate from (2E)-4-hydroxy-3-methylbutenyl diphosphate: step 1/1. The protein operates within isoprenoid biosynthesis; isopentenyl diphosphate biosynthesis via DXP pathway; isopentenyl diphosphate from 1-deoxy-D-xylulose 5-phosphate: step 6/6. Functionally, catalyzes the conversion of 1-hydroxy-2-methyl-2-(E)-butenyl 4-diphosphate (HMBPP) into a mixture of isopentenyl diphosphate (IPP) and dimethylallyl diphosphate (DMAPP). Acts in the terminal step of the DOXP/MEP pathway for isoprenoid precursor biosynthesis. In Neisseria meningitidis serogroup A / serotype 4A (strain DSM 15465 / Z2491), this protein is 4-hydroxy-3-methylbut-2-enyl diphosphate reductase.